Reading from the N-terminus, the 509-residue chain is Dihydrolipoyl dehydrogenase, mitochondrial (509 aa).

A mitochondrion-targeting transit peptide spans 1–35; sequence MQSWSRVYCSLAKRGHFNRISHGLQGLSAVPLRTY. K66 carries the N6-acetyllysine; alternate modification. K66 carries the post-translational modification N6-succinyllysine; alternate. FAD is bound by residues 71 to 80 and K89; that span reads EKNETLGGTC. C80 and C85 are disulfide-bonded. An N6-acetyllysine; alternate mark is found at K104, K122, K132, and K143. Residues K104, K122, K132, and K143 each carry the N6-succinyllysine; alternate modification. G154 lines the FAD pocket. K159 and K166 each carry N6-succinyllysine. 183–185 contributes to the FAD binding site; sequence TGS. Residues 220–227 and E243 each bind NAD(+); that span reads GAGVIGVE. An N6-succinyllysine mark is found at K273 and K277. An NAD(+)-binding site is contributed by V278. Phosphoserine is present on residues S285 and S297. G314 contacts NAD(+). Residue K346 is modified to N6-acetyllysine. Residues D355 and 361–364 contribute to the FAD site; that span reads MLAH. K410 is subject to N6-acetyllysine; alternate. K410 is modified (N6-succinyllysine; alternate). Residues K417 and K420 each carry the N6-acetyllysine modification. K430 is subject to N6-succinyllysine. Residue H487 is the Proton acceptor of the active site. Residue S502 is modified to Phosphoserine. K505 bears the N6-acetyllysine; alternate mark. N6-succinyllysine; alternate is present on K505.

Belongs to the class-I pyridine nucleotide-disulfide oxidoreductase family. In terms of assembly, homodimer. Part of the multimeric pyruvate dehydrogenase complex that contains multiple copies of pyruvate dehydrogenase (subunits PDHA (PDHA1 or PDHA2) and PDHB, E1), dihydrolipoamide acetyltransferase (DLAT, E2) and lipoamide dehydrogenase (DLD, E3). These subunits are bound to an inner core composed of about 48 DLAT and 12 PDHX molecules (by non covalent bonds). The 2-oxoglutarate dehydrogenase complex is composed of OGDH (2-oxoglutarate dehydrogenase; E1), DLST (dihydrolipoamide succinyltransferase; E2), DLD (dihydrolipoamide dehydrogenase; E3) and the assembly factor KGD4. It contains multiple copies of the three enzymatic components (E1, E2 and E3). In the nucleus, the 2-oxoglutarate dehydrogenase complex associates with KAT2A. Interacts with PDHX. FAD is required as a cofactor. Post-translationally, tyrosine phosphorylated.

Its subcellular location is the mitochondrion matrix. It localises to the nucleus. The protein localises to the cell projection. The protein resides in the cilium. It is found in the flagellum. Its subcellular location is the cytoplasmic vesicle. It localises to the secretory vesicle. The protein localises to the acrosome. It carries out the reaction N(6)-[(R)-dihydrolipoyl]-L-lysyl-[protein] + NAD(+) = N(6)-[(R)-lipoyl]-L-lysyl-[protein] + NADH + H(+). In terms of biological role, lipoamide dehydrogenase is a component of the glycine cleavage system as well as an E3 component of three alpha-ketoacid dehydrogenase complexes (pyruvate-, alpha-ketoglutarate-, and branched-chain amino acid-dehydrogenase complex). The 2-oxoglutarate dehydrogenase complex is mainly active in the mitochondrion. A fraction of the 2-oxoglutarate dehydrogenase complex also localizes in the nucleus and is required for lysine succinylation of histones: associates with KAT2A on chromatin and provides succinyl-CoA to histone succinyltransferase KAT2A. In monomeric form may have additional moonlighting function as serine protease. Involved in the hyperactivation of spermatazoa during capacitation and in the spermatazoal acrosome reaction. The chain is Dihydrolipoyl dehydrogenase, mitochondrial (DLD) from Pongo abelii (Sumatran orangutan).